Consider the following 363-residue polypeptide: Aminomethyltransferase (363 aa).

The protein belongs to the GcvT family. The glycine cleavage system is composed of four proteins: P, T, L and H.

The enzyme catalyses N(6)-[(R)-S(8)-aminomethyldihydrolipoyl]-L-lysyl-[protein] + (6S)-5,6,7,8-tetrahydrofolate = N(6)-[(R)-dihydrolipoyl]-L-lysyl-[protein] + (6R)-5,10-methylene-5,6,7,8-tetrahydrofolate + NH4(+). Its function is as follows. The glycine cleavage system catalyzes the degradation of glycine. The sequence is that of Aminomethyltransferase from Thermotoga neapolitana (strain ATCC 49049 / DSM 4359 / NBRC 107923 / NS-E).